A 337-amino-acid polypeptide reads, in one-letter code: DNA-directed RNA polymerase subunit alpha (337 aa).

An alpha N-terminal domain (alpha-NTD) region spans residues 1-233 (MVREDVVGST…DLLIPFLHAE (233 aa)). The alpha C-terminal domain (alpha-CTD) stretch occupies residues 265 to 337 (KGIPLTCIFI…FAINLLNKKL (73 aa)).

This sequence belongs to the RNA polymerase alpha chain family. In terms of assembly, in plastids the minimal PEP RNA polymerase catalytic core is composed of four subunits: alpha, beta, beta', and beta''. When a (nuclear-encoded) sigma factor is associated with the core the holoenzyme is formed, which can initiate transcription.

It localises to the plastid. It is found in the chloroplast. The catalysed reaction is RNA(n) + a ribonucleoside 5'-triphosphate = RNA(n+1) + diphosphate. Its function is as follows. DNA-dependent RNA polymerase catalyzes the transcription of DNA into RNA using the four ribonucleoside triphosphates as substrates. The protein is DNA-directed RNA polymerase subunit alpha of Phalaenopsis aphrodite subsp. formosana (Moth orchid).